A 98-amino-acid chain; its full sequence is MTKSELIERIVTHQGLLSSKDVELAIKTMLEQMSQCLATGDRIEIRGFGSFSLHYRAPRVGRNPKTGQSVSLDGKFVPHFKPGKELRDRVNEDEEEGV.

Belongs to the bacterial histone-like protein family. As to quaternary structure, heterodimer of an alpha and a beta chain.

Functionally, this protein is one of the two subunits of integration host factor, a specific DNA-binding protein that functions in genetic recombination as well as in transcriptional and translational control. The polypeptide is Integration host factor subunit beta (Pseudomonas fluorescens (strain SBW25)).